Here is a 231-residue protein sequence, read N- to C-terminus: Ribosyldihydronicotinamide dehydrogenase [quinone] (231 aa).

FAD-binding positions include histidine 12 and 18–21 (FNGS). The residue at position 80 (serine 80) is a Phosphoserine. 104–107 (LYWF) is an FAD binding site. 127–129 (FDI) lines the substrate pocket. Residues 148–151 (TTGG) and tyrosine 156 contribute to the FAD site. The Zn(2+) site is built by histidine 174 and histidine 178. Glutamate 194 provides a ligand contact to FAD. Residue serine 197 is modified to Phosphoserine. Arginine 201 is an FAD binding site. Cysteine 223 contributes to the Zn(2+) binding site.

This sequence belongs to the NAD(P)H dehydrogenase (quinone) family. In terms of assembly, homodimer. Requires Zn(2+) as cofactor. The cofactor is FAD.

It is found in the cytoplasm. It carries out the reaction 1-(beta-D-ribofuranosyl)-1,4-dihydronicotinamide + a quinone + H(+) = beta-nicotinamide D-riboside + a quinol. Its activity is regulated as follows. Inhibited by melatonin, resveratrol and 5-hydroxytryptamine. The enzyme apparently serves as a quinone reductase in connection with conjugation reactions of hydroquinones involved in detoxification pathways as well as in biosynthetic processes such as the vitamin K-dependent gamma-carboxylation of glutamate residues in prothrombin synthesis. In Homo sapiens (Human), this protein is Ribosyldihydronicotinamide dehydrogenase [quinone] (NQO2).